The primary structure comprises 630 residues: MDFPTRFDVIVIGGGHAGTEAALAAARMGVKTLLLTHNVETLGQMSCNPAIGGIGKSHLVKEIDALGGAMAEATDKGGIQFRILNSRKGPAVRATRAQADRVLYKAAIRHTLENQPNLWIFQQACDDLIVEQDQVRGVVTQMGLRFHADNVVLTTGTFLGGLIHIGLENYSGGRAGDPPSIALARRLRELPLRVGRLKTGTPPRIDGRSVDFSVMTEQPGDTPIPVMSFLGSKEQHPEQVSCWITHTNARTHEIIAANLDRSPMYSGVIEGIGPRYCPSIEDKIHRFADKESHQVFLEPEGLTTHELYPNGISTSLPFDVQLQIVRSIRGMENAHIVRPGYAIEYDFFDPRDLRYSLETKVIGGLFFAGQINGTTGYEEAGAQGLLAGANAALRSQGKDSWCPRRDEAYIGVLVDDLITLGTQEPYRMFTSRAEYRLILREDNADLRLTEKGRELGLVDDRRWAAFEAKREGIEREEQRLKSTWVRPNTPQGDAIAERFGTPLTHEYNLLNLLSRPEIDYAGLVEITGNAVDNPQVAEQVEIRTKYAGYIDRQQEEISRLRASEDTRLPVDIDYLGISGLSKEIQNKLNQARPETLGQASRIPGVTPAAISLLLIHLKKRASGRQLEQSA.

Residue 13–18 participates in FAD binding; it reads GGGHAG. 273–287 contacts NAD(+); it reads GPRYCPSIEDKIHRF.

Belongs to the MnmG family. Homodimer. Heterotetramer of two MnmE and two MnmG subunits. FAD serves as cofactor.

The protein localises to the cytoplasm. Functionally, NAD-binding protein involved in the addition of a carboxymethylaminomethyl (cmnm) group at the wobble position (U34) of certain tRNAs, forming tRNA-cmnm(5)s(2)U34. This chain is tRNA uridine 5-carboxymethylaminomethyl modification enzyme MnmG, found in Pseudomonas aeruginosa (strain ATCC 15692 / DSM 22644 / CIP 104116 / JCM 14847 / LMG 12228 / 1C / PRS 101 / PAO1).